Reading from the N-terminus, the 101-residue chain is MVCEKCEKKLGRVITPDTWKDGARNTTESGGRKLNENKMLTSKKARFDPYGKSGFATCRICKSSVHQSGSHYCQGCAYKKGICAMCGKKVIDTKNYKQTSV.

This sequence belongs to the CRIPT family. As to quaternary structure, component of the minor spliceosome, which splices U12-type introns.

It localises to the cytoplasm. In terms of biological role, as a component of the minor spliceosome, involved in the splicing of U12-type introns in pre-mRNAs. The chain is Cysteine-rich PDZ-binding protein (cript) from Danio rerio (Zebrafish).